The following is a 126-amino-acid chain: L-alanine exporter AlaE (126 aa).

Residues 23-43 (FALVVYCFFTGMAIEILLSGM) form a helical membrane-spanning segment.

It belongs to the AlaE exporter family.

It localises to the cell inner membrane. In terms of biological role, exports L-alanine. In Sodalis glossinidius (strain morsitans), this protein is L-alanine exporter AlaE.